A 62-amino-acid chain; its full sequence is Paralithocin 1 (62 aa).

Residues 1 to 23 form the signal peptide; the sequence is MGPMKVLLVLLVVMVAAPHIADA. 4 disulfides stabilise this stretch: Cys29–Cys55, Cys33–Cys51, Cys37–Cys49, and Cys42–Cys52. Tyr61 bears the Tyrosine amide; partial mark.

Belongs to the paralithocin family. In terms of processing, the amidated form is probably the active form.

Has weak antibacterial activity, mainly against marine Gram-positive bacteria like C.maltaromaticum (MIC=200 uM), C.mobile (MIC=100 uM), C.divergens (MIC=200 uM) and C.funditum (MIC=200 uM) but also against C.glutamicum (MIC=50 uM). Has very little or no activity against Gram-negative bacteria. The chain is Paralithocin 1 from Paralithodes camtschaticus (Red king crab).